Consider the following 283-residue polypeptide: Probable 3-deoxy-manno-octulosonic acid transferase (283 aa).

Its subcellular location is the cytoplasm. The catalysed reaction is an alpha-Kdo-(2-&gt;4)-alpha-Kdo-(2-&gt;6)-lipid IVA + CMP-3-deoxy-beta-D-manno-octulosonate = an alpha-Kdo-(2-&gt;4)-alpha-Kdo-(2-&gt;4)-alpha-Kdo-(2-&gt;6)-lipid IVA + CMP + H(+). It catalyses the reaction alpha-Kdo-(2-&gt;4)-alpha-Kdo-(2-&gt;6)-lipid IVA (E. coli) + CMP-3-deoxy-beta-D-manno-octulosonate = alpha-Kdo-(2-&gt;4)-alpha-Kdo-(2-&gt;4)-alpha-Kdo-(2-&gt;6)-lipid IVA + CMP + H(+). It participates in bacterial outer membrane biogenesis; LPS core biosynthesis. The protein operates within bacterial outer membrane biogenesis; LOS core biosynthesis. In terms of biological role, involved in the biosynthesis of the core oligosaccharide region of lipopolysaccharide (LPS). Required for the addition of 3-deoxy-D-manno-oct-2-ulosonic acid III (KdoIII) to the KdoII residue of the inner lipopolysaccharide core. May also play a role in a lipooligosaccharide (LOS) biosynthesis pathway. This Escherichia coli (strain K12) protein is Probable 3-deoxy-manno-octulosonic acid transferase.